The following is a 291-amino-acid chain: Shikimate dehydrogenase (NADP(+)) (291 aa).

Shikimate-binding positions include 18 to 20 (SLS) and Thr70. Lys74 serves as the catalytic Proton acceptor. Residues Asn95 and Asp110 each contribute to the shikimate site. NADP(+) is bound by residues 134-138 (GAGGA) and Val228. Tyr230 lines the shikimate pocket. Gly251 is an NADP(+) binding site.

The protein belongs to the shikimate dehydrogenase family. In terms of assembly, homodimer.

It catalyses the reaction shikimate + NADP(+) = 3-dehydroshikimate + NADPH + H(+). Its pathway is metabolic intermediate biosynthesis; chorismate biosynthesis; chorismate from D-erythrose 4-phosphate and phosphoenolpyruvate: step 4/7. Its function is as follows. Involved in the biosynthesis of the chorismate, which leads to the biosynthesis of aromatic amino acids. Catalyzes the reversible NADPH linked reduction of 3-dehydroshikimate (DHSA) to yield shikimate (SA). This is Shikimate dehydrogenase (NADP(+)) from Streptomyces avermitilis (strain ATCC 31267 / DSM 46492 / JCM 5070 / NBRC 14893 / NCIMB 12804 / NRRL 8165 / MA-4680).